The chain runs to 121 residues: Large ribosomal subunit protein uL22 (121 aa).

This sequence belongs to the universal ribosomal protein uL22 family. As to quaternary structure, part of the 50S ribosomal subunit.

This protein binds specifically to 23S rRNA; its binding is stimulated by other ribosomal proteins, e.g. L4, L17, and L20. It is important during the early stages of 50S assembly. It makes multiple contacts with different domains of the 23S rRNA in the assembled 50S subunit and ribosome. Functionally, the globular domain of the protein is located near the polypeptide exit tunnel on the outside of the subunit, while an extended beta-hairpin is found that lines the wall of the exit tunnel in the center of the 70S ribosome. The chain is Large ribosomal subunit protein uL22 from Synechococcus sp. (strain CC9311).